We begin with the raw amino-acid sequence, 246 residues long: UDP-N-acetyl-D-mannosaminuronic acid transferase (246 aa).

It belongs to the glycosyltransferase 26 family.

It carries out the reaction UDP-N-acetyl-alpha-D-mannosaminouronate + N-acetyl-alpha-D-glucosaminyl-di-trans,octa-cis-undecaprenyl diphosphate = beta-D-ManNAcA-(1-&gt;4)-alpha-D-GlcNAc-di-trans,octa-cis-undecaprenyl diphosphate + UDP + H(+). Its pathway is bacterial outer membrane biogenesis; enterobacterial common antigen biosynthesis. In terms of biological role, catalyzes the synthesis of Und-PP-GlcNAc-ManNAcA (Lipid II), the second lipid-linked intermediate involved in enterobacterial common antigen (ECA) synthesis. The chain is UDP-N-acetyl-D-mannosaminuronic acid transferase from Escherichia coli O6:K15:H31 (strain 536 / UPEC).